The following is a 456-amino-acid chain: Exodeoxyribonuclease 7 large subunit (456 aa).

Belongs to the XseA family. As to quaternary structure, heterooligomer composed of large and small subunits.

The protein localises to the cytoplasm. It catalyses the reaction Exonucleolytic cleavage in either 5'- to 3'- or 3'- to 5'-direction to yield nucleoside 5'-phosphates.. Functionally, bidirectionally degrades single-stranded DNA into large acid-insoluble oligonucleotides, which are then degraded further into small acid-soluble oligonucleotides. The sequence is that of Exodeoxyribonuclease 7 large subunit from Lactobacillus gasseri (strain ATCC 33323 / DSM 20243 / BCRC 14619 / CIP 102991 / JCM 1131 / KCTC 3163 / NCIMB 11718 / NCTC 13722 / AM63).